Reading from the N-terminus, the 99-residue chain is UPF0320 protein YER188C-A (99 aa).

This sequence belongs to the UPF0320 family.

The polypeptide is UPF0320 protein YER188C-A (Saccharomyces cerevisiae (strain ATCC 204508 / S288c) (Baker's yeast)).